The sequence spans 162 residues: Transcription elongation factor GreA (162 aa).

Residues 44–69 (SENAEYEAAREKQAFVEARIKHLEDI) adopt a coiled-coil conformation.

Belongs to the GreA/GreB family.

Necessary for efficient RNA polymerase transcription elongation past template-encoded arresting sites. The arresting sites in DNA have the property of trapping a certain fraction of elongating RNA polymerases that pass through, resulting in locked ternary complexes. Cleavage of the nascent transcript by cleavage factors such as GreA or GreB allows the resumption of elongation from the new 3'terminus. GreA releases sequences of 2 to 3 nucleotides. The protein is Transcription elongation factor GreA of Rickettsia bellii (strain RML369-C).